A 205-amino-acid polypeptide reads, in one-letter code: Small ribosomal subunit protein uS4 (205 aa).

Positions 1–16 (MSKRESSKYKIDRRMG) are enriched in basic and acidic residues. Residues 1 to 46 (MSKRESSKYKIDRRMGENIWGRPKSPVNRREYGPGQHGQRRKGKLS) are disordered. In terms of domain architecture, S4 RNA-binding spans 94–157 (SRLDAIVYRA…KQLVIVLEAV (64 aa)).

Belongs to the universal ribosomal protein uS4 family. In terms of assembly, part of the 30S ribosomal subunit. Contacts protein S5. The interaction surface between S4 and S5 is involved in control of translational fidelity.

Functionally, one of the primary rRNA binding proteins, it binds directly to 16S rRNA where it nucleates assembly of the body of the 30S subunit. In terms of biological role, with S5 and S12 plays an important role in translational accuracy. The chain is Small ribosomal subunit protein uS4 from Rhizobium leguminosarum bv. trifolii (strain WSM2304).